Consider the following 167-residue polypeptide: uncharacterized protein (167 aa).

The protein localises to the plastid. It is found in the chloroplast. This is an uncharacterized protein from Mesostigma viride (Green alga).